Consider the following 477-residue polypeptide: Salivary plasminogen activator alpha 1 (477 aa).

Positions 1 to 36 (MVNTMKTKLLCVLLLCGAVFSLPRQETYRQLARGSR) are cleaved as a signal peptide. The Fibronectin type-I domain maps to 40 to 82 (VACKDEITQMTYRRQESWLRPEVRSKRVEHCQCDRGQARCHTV). 14 disulfide bridges follow: C42/C72, C70/C79, C87/C98, C92/C109, C111/C120, C128/C209, C149/C191, C180/C204, C214/C345, C257/C273, C265/C334, C359/C434, C391/C407, and C424/C452. The EGF-like domain maps to 83-121 (PVNSCSEPRCFNGGTCWQAVYFSDFVCQCPAGYTGKRCE). The Kringle domain maps to 128–209 (CYEGQGVTYR…TSESCSVPVC (82 aa)). N153 is a glycosylation site (N-linked (GlcNAc...) asparagine). Residues 226–476 (STGGLFTDIT…YLGWIRDNMH (251 aa)) enclose the Peptidase S1 domain. Catalysis depends on charge relay system residues H272 and D321. An N-linked (GlcNAc...) asparagine glycan is attached at N398. S428 serves as the catalytic Charge relay system.

It belongs to the peptidase S1 family. Monomer.

It is found in the secreted. It catalyses the reaction Specific cleavage of Arg-|-Val bond in plasminogen to form plasmin.. Its activity is regulated as follows. Activity toward plasminogen is stimulated in the presence of fibrin I. In terms of biological role, probably essential to support the feeding habits of this exclusively haematophagous animal. Potent thrombolytic agent. This chain is Salivary plasminogen activator alpha 1, found in Desmodus rotundus (Vampire bat).